A 279-amino-acid chain; its full sequence is Putative expansin-A26 (279 aa).

The signal sequence occupies residues 1–27 (MKLLEKMIYVEFLMIIMAMWVVPMSYG). In terms of domain architecture, Expansin-like EG45 spans 76 to 186 (QGACGYGNLF…RRIPCSKTGG (111 aa)). Residues 196 to 275 (YFLMVLIYNV…NWGFGQTFDG (80 aa)) enclose the Expansin-like CBD domain.

Belongs to the expansin family. Expansin A subfamily.

Its subcellular location is the secreted. It localises to the cell wall. It is found in the membrane. In terms of biological role, causes loosening and extension of plant cell walls by disrupting non-covalent bonding between cellulose microfibrils and matrix glucans. No enzymatic activity has been found. In Arabidopsis thaliana (Mouse-ear cress), this protein is Putative expansin-A26 (EXPA26).